A 246-amino-acid chain; its full sequence is uncharacterized protein (246 aa).

Position 194 is a phosphoserine (Ser-194).

This is an uncharacterized protein from Schizosaccharomyces pombe (strain 972 / ATCC 24843) (Fission yeast).